A 152-amino-acid chain; its full sequence is Nucleoside diphosphate kinase B (152 aa).

Positions 1–66 (MANLERTFIA…DRPFFPGLVK (66 aa)) are interaction with AKAP13. Residues K12, F60, R88, T94, R105, and N115 each contribute to the ATP site. Residue H118 is the Pros-phosphohistidine intermediate of the active site.

The protein belongs to the NDK family. Hexamer of two different chains: An and B (A6, A5B, A4B2, A3B3, A2B4, AB5, B6). Interacts with CAPN8. Interacts with AKAP13. Interacts with ITGB1BP1 (via C-terminal domain region). Interacts with BCL2L10. Mg(2+) serves as cofactor.

It localises to the cytoplasm. It is found in the cell projection. Its subcellular location is the lamellipodium. The protein resides in the ruffle. The protein localises to the nucleus. The enzyme catalyses a 2'-deoxyribonucleoside 5'-diphosphate + ATP = a 2'-deoxyribonucleoside 5'-triphosphate + ADP. The catalysed reaction is a ribonucleoside 5'-diphosphate + ATP = a ribonucleoside 5'-triphosphate + ADP. It carries out the reaction ATP + protein L-histidine = ADP + protein N-phospho-L-histidine.. Major role in the synthesis of nucleoside triphosphates other than ATP. The ATP gamma phosphate is transferred to the NDP beta phosphate via a ping-pong mechanism, using a phosphorylated active-site intermediate. Negatively regulates Rho activity by interacting with AKAP13/LBC. Acts as a transcriptional activator of the MYC gene; binds DNA non-specifically. Binds to both single-stranded guanine- and cytosine-rich strands within the nuclease hypersensitive element (NHE) III(1) region of the MYC gene promoter. Does not bind to duplex NHE III(1). Has G-quadruplex (G4) DNA-binding activity, which is independent of its nucleotide-binding and kinase activity. Binds both folded and unfolded G4 with similar low nanomolar affinities. Stabilizes folded G4s regardless of whether they are prefolded or not. Exhibits histidine protein kinase activity. This chain is Nucleoside diphosphate kinase B (NME2), found in Pongo abelii (Sumatran orangutan).